A 338-amino-acid chain; its full sequence is GTP 3',8-cyclase (338 aa).

A Radical SAM core domain is found at Lys8–Glu227. Arg17 contacts GTP. [4Fe-4S] cluster-binding residues include Cys24 and Cys28. Tyr30 contributes to the S-adenosyl-L-methionine binding site. Cys31 contributes to the [4Fe-4S] cluster binding site. Arg71 provides a ligand contact to GTP. Gly75 provides a ligand contact to S-adenosyl-L-methionine. Thr102 is a binding site for GTP. S-adenosyl-L-methionine is bound at residue Ser126. Lys163 is a GTP binding site. Residue Met197 coordinates S-adenosyl-L-methionine. [4Fe-4S] cluster contacts are provided by Cys261 and Cys264. Arg266–Arg268 serves as a coordination point for GTP. Cys278 is a binding site for [4Fe-4S] cluster.

The protein belongs to the radical SAM superfamily. MoaA family. As to quaternary structure, monomer and homodimer. It depends on [4Fe-4S] cluster as a cofactor.

It carries out the reaction GTP + AH2 + S-adenosyl-L-methionine = (8S)-3',8-cyclo-7,8-dihydroguanosine 5'-triphosphate + 5'-deoxyadenosine + L-methionine + A + H(+). It functions in the pathway cofactor biosynthesis; molybdopterin biosynthesis. Catalyzes the cyclization of GTP to (8S)-3',8-cyclo-7,8-dihydroguanosine 5'-triphosphate. The polypeptide is GTP 3',8-cyclase (Bacillus anthracis (strain CDC 684 / NRRL 3495)).